The following is a 431-amino-acid chain: Enolase (431 aa).

Position 163 (Gln-163) interacts with (2R)-2-phosphoglycerate. Glu-205 functions as the Proton donor in the catalytic mechanism. Mg(2+) is bound by residues Asp-242, Glu-283, and Asp-310. Positions 335, 364, 365, and 386 each coordinate (2R)-2-phosphoglycerate. The active-site Proton acceptor is the Lys-335.

This sequence belongs to the enolase family. It depends on Mg(2+) as a cofactor.

It localises to the cytoplasm. It is found in the secreted. Its subcellular location is the cell surface. It catalyses the reaction (2R)-2-phosphoglycerate = phosphoenolpyruvate + H2O. It participates in carbohydrate degradation; glycolysis; pyruvate from D-glyceraldehyde 3-phosphate: step 4/5. Catalyzes the reversible conversion of 2-phosphoglycerate (2-PG) into phosphoenolpyruvate (PEP). It is essential for the degradation of carbohydrates via glycolysis. The protein is Enolase of Kineococcus radiotolerans (strain ATCC BAA-149 / DSM 14245 / SRS30216).